A 233-amino-acid chain; its full sequence is Urease accessory protein UreF (233 aa).

Belongs to the UreF family. As to quaternary structure, ureD, UreF and UreG form a complex that acts as a GTP-hydrolysis-dependent molecular chaperone, activating the urease apoprotein by helping to assemble the nickel containing metallocenter of UreC. The UreE protein probably delivers the nickel.

It is found in the cytoplasm. In terms of biological role, required for maturation of urease via the functional incorporation of the urease nickel metallocenter. The protein is Urease accessory protein UreF of Polaromonas sp. (strain JS666 / ATCC BAA-500).